Consider the following 89-residue polypeptide: Small ribosomal subunit protein uS17 (89 aa).

It belongs to the universal ribosomal protein uS17 family. Part of the 30S ribosomal subunit.

One of the primary rRNA binding proteins, it binds specifically to the 5'-end of 16S ribosomal RNA. In Coxiella burnetii (strain Dugway 5J108-111), this protein is Small ribosomal subunit protein uS17.